We begin with the raw amino-acid sequence, 321 residues long: Peroxidase 42 (321 aa).

The first 29 residues, 1–29, serve as a signal peptide directing secretion; the sequence is MATSSGSCLIISLLVVVVAAALSASTASA. Gln30 is modified (pyrrolidone carboxylic acid). Intrachain disulfides connect Cys40/Cys118, Cys73/Cys78, Cys124/Cys315, and Cys202/Cys227. His71 serves as the catalytic Proton acceptor. Asp72, Ile75, Gly77, Asp79, and Ser81 together coordinate Ca(2+). N-linked (GlcNAc...) asparagine glycosylation is found at Asn85 and Asn96. Pro165 lines the substrate pocket. His195 is a heme b binding site. Thr196 lines the Ca(2+) pocket. Asn211 is a glycosylation site (N-linked (GlcNAc...) asparagine). Ca(2+) is bound by residues Asp239, Thr242, and Gly247. N-linked (GlcNAc...) asparagine glycosylation occurs at Asn270.

This sequence belongs to the peroxidase family. Classical plant (class III) peroxidase subfamily. Heme b is required as a cofactor. Ca(2+) serves as cofactor.

The protein localises to the secreted. The enzyme catalyses 2 a phenolic donor + H2O2 = 2 a phenolic radical donor + 2 H2O. Removal of H(2)O(2), oxidation of toxic reductants, biosynthesis and degradation of lignin, suberization, auxin catabolism, response to environmental stresses such as wounding, pathogen attack and oxidative stress. These functions might be dependent on each isozyme/isoform in each plant tissue. This Zea mays (Maize) protein is Peroxidase 42 (PER42).